A 358-amino-acid polypeptide reads, in one-letter code: Gentisate 1,2-dioxygenase (358 aa).

A Cupin type-1 domain is found at 239–358; sequence QTLRQRAEND…AFNFYAEAEP (120 aa).

Belongs to the gentisate 1,2-dioxygenase family. In terms of assembly, homotetramer.

The enzyme catalyses 2,5-dihydroxybenzoate + O2 = 3-maleylpyruvate + H(+). It participates in aromatic compound metabolism; naphthalene degradation. Inhibited by 2,2'-dipyridyl. Its function is as follows. Catalyzes the oxygen-dependent ring fission of gentisate between the carboxyl and proximal hydroxyl groups at positions 1 and 2 of the aromatic ring to form maleylpyruvate. No activity with cathechol and protecatechuate as substrates. Part of a 3-hydroxybenzoic acid-degradation pathway. The sequence is that of Gentisate 1,2-dioxygenase (gdoA) from Haloferax sp.